A 1879-amino-acid polypeptide reads, in one-letter code: MIFQSFILGNLVSLCMKIINSVVVVGLYYGFLTTFSIGPSYLFLLRARVMEEGEEGTEKKVSATTGFITGQLMMFISIYYAPLHLALGRPHTITVLALPYLLFHFFWNNHKHFFDYGSTNRNSMRNLSIQCVFLNNLIFQLFNHFILPSSMLVRLVNIYMFRCNNKMLFVTSSFVGWLIGHILFMKWVGLVLVWIQQNNSIRSNKYLMSELRNFMVRIFSILLFITCVYYLGRIPSPILTKKLKETEERGESEEERDVEKTSETKGTKQEQEGSTEEDPSPSLFSEEKEDPEKIDFKETRYKNKPVYETYYLDVDRNQENSKLEIFKEKKELLWFEKPLVTILFDYKRWNRPFRYIKNDKFENAVKNEMSQYFFHTCESDGKKRISFTYPPSLSTFFEMIQRKMSLFTTDKLYSDELYNNWSYTNEQKRKNLNNKLINIIKDLDKALDSKFLILDVLEKRPRLCHDNTKKKYLPKVYDPFLNGAYRGQIKKRFSLSIKDKVSIQNYIERGWINKIHGLFLIINYLEFEEKKPFHRIDKRLLSTEMNFFLNLINEFNGKPTSSLNFKKFYLLPEHKQLRINLEGREKKIRFLFERFLTDPNNKTIRKQAIGIKEIRKKIPQWSYKLIDDLEQEEGENEEALGTDSQIRSRKCKRVLIFNHELENTNGYSNSQDTNNNDERDDIALIRYSQQSDFRRDIIKGSMRAQRRKTVIWKTFQANVHSLPFLDRIDKDVYFSFDMLRPIKKKFQHWLWKKPEFKISDYREKKSKDKKKEEEKRRENARIEIAETWDSIVVAQVIRGFVLVIQSILRKYIILPSLIIVKNIGRILLFQFPEWSEDVKDWKREVHVNCTYNGVQLAEKEFPKNWLIDGIQIKILFPFRLKPWHKSKLKLRNNYKDPMKKKEQQNDFCFLTVWGMETELPFGSPRKQLSFFEPIFKELKKRLIKLKKKCFRILIILKERTKLFLNVSKERKKWVIKNIVFLKKIIKELSKMNPILLVGLREIELYELSESKKEKNLIIDNELIHEPSINIQSTNWTTFSLTKKKIQDLTNRTNTTINQIQKISKDNKKGFLSPHINISSNKMSYNDKRLELPKNILQLLKRRNVRLIRKSNYFIKFFIERIYRNIFLFISNIPKINAQLFFYFFESLKKIVNKTSSYNNYIYNNERNQEKIDKTNQKITQFISTIKESLSNINNKNLETFCNLSYLSQAYVFYKLSQSRGFNFFNLYKLRLRSVFQYNGAFLFLKNEIKDYFLGTQKIFHSELRHKNIPNYEINQWKNCLRGYYQNNLSQSRLVPQKGINIVNQHSIAQNNHLNKYDSYEKNPLINSEKKNVKKKYRYDLLSYNFINYEDKKNSSIYGLPLQVNNNQEIFYNYTEHKRKLFNMLVGIPINNYLVEDNIIDIKNNPDRKNFDWIILNFCLRKKMDIRAWINMDTDANSNKYTKPRANNYQIIDKIDNKDLFYPTIHQNQEMNPSKKKLFDWMRMNEEILSCPISNLELWFFPEFLILYTSYKIKPWYIPIKFLLLNLNVNENASGNKNKKTTGKKKRDIFISIFSNEKKYLELEKQNQVEKEYGIKTDFESTLSNQEKDIEENYAVSKMKKNKKQSRTNMEAEFDFLLKRYLLFQLRWDDSLNKKMIDNIKVYCSLLRPINLREITIASIQRGEINLDLLMIQKNFILTELIKKGILLIEPVRLSRKNEGQFIMYQTIGISLVHKSKHTINQRYREKGLVDTKNFDEFISKHQKMTENRDKNHYDLFVPETILSPRHRRELRILICFNSRNRNGIPSNAFFCNENKVKSPVLNKSKINQNNIIRLKFFLWPNYRLEDFACMNRYWFDTNNGSRFSMVRIHMYPQFKNELKRVLKKSEIRIDFISRTILHI.

Helical transmembrane passes span 18–38 (IINS…FSIG), 67–87 (FITG…HLAL), 90–110 (PHTI…WNNH), 127–147 (LSIQ…HFIL), 175–195 (VGWL…LVWI), and 218–238 (IFSI…PSPI). The interval 243 to 291 (LKETEERGESEEERDVEKTSETKGTKQEQEGSTEEDPSPSLFSEEKEDP) is disordered. Basic and acidic residues predominate over residues 257-271 (DVEKTSETKGTKQEQ).

This sequence belongs to the TIC214 family. As to quaternary structure, part of the Tic complex.

The protein resides in the plastid. Its subcellular location is the chloroplast inner membrane. In terms of biological role, involved in protein precursor import into chloroplasts. May be part of an intermediate translocation complex acting as a protein-conducting channel at the inner envelope. The protein is Protein TIC 214 of Morus indica (Mulberry).